The following is a 313-amino-acid chain: Ribosomal RNA small subunit methyltransferase H (313 aa).

Residues 35–37 (GGH), D55, F80, D102, and Q109 contribute to the S-adenosyl-L-methionine site.

It belongs to the methyltransferase superfamily. RsmH family.

It is found in the cytoplasm. The catalysed reaction is cytidine(1402) in 16S rRNA + S-adenosyl-L-methionine = N(4)-methylcytidine(1402) in 16S rRNA + S-adenosyl-L-homocysteine + H(+). Functionally, specifically methylates the N4 position of cytidine in position 1402 (C1402) of 16S rRNA. In Shewanella denitrificans (strain OS217 / ATCC BAA-1090 / DSM 15013), this protein is Ribosomal RNA small subunit methyltransferase H.